Reading from the N-terminus, the 144-residue chain is Large ribosomal subunit protein uL13 (144 aa).

Belongs to the universal ribosomal protein uL13 family. Part of the 50S ribosomal subunit.

This protein is one of the early assembly proteins of the 50S ribosomal subunit, although it is not seen to bind rRNA by itself. It is important during the early stages of 50S assembly. This chain is Large ribosomal subunit protein uL13, found in Clostridium acetobutylicum (strain ATCC 824 / DSM 792 / JCM 1419 / IAM 19013 / LMG 5710 / NBRC 13948 / NRRL B-527 / VKM B-1787 / 2291 / W).